Consider the following 726-residue polypeptide: Probable pre-mRNA-splicing factor ATP-dependent RNA helicase DEAH2 (726 aa).

The Helicase ATP-binding domain occupies 71-240 (LKTLNNNQTL…FSGAPLMKVP (170 aa)). 84–91 (GETGSGKT) lines the ATP pocket. Residues 187–190 (DEAH) carry the DEAH box motif. The 181-residue stretch at 265 to 445 (TVVQIHMCEP…NTVLTLKKLG (181 aa)) folds into the Helicase C-terminal domain.

This sequence belongs to the DEAD box helicase family. DEAH subfamily. PRP43 sub-subfamily.

The catalysed reaction is ATP + H2O = ADP + phosphate + H(+). May be involved in pre-mRNA splicing. This Arabidopsis thaliana (Mouse-ear cress) protein is Probable pre-mRNA-splicing factor ATP-dependent RNA helicase DEAH2.